Consider the following 325-residue polypeptide: Melanocortin receptor 5 (325 aa).

The Extracellular segment spans residues 1 to 37 (MNSSSTLTVLNLTLNASEDGILGSNVKNKSLACEEMG). N-linked (GlcNAc...) asparagine glycans are attached at residues N2, N11, N15, and N28. The helical transmembrane segment at 38 to 61 (IAVEVFLTLGLVSLLENILVIGAI) threads the bilayer. Residues 62–73 (VKNKNLHSPMYF) are Cytoplasmic-facing. A helical membrane pass occupies residues 74-97 (FVGSLAVADMLVSMSNAWETVTIY). Residues 98-114 (LLNNKHLVIADTFVRHI) lie on the Extracellular side of the membrane. Residues 115–138 (DNVFDSMICISVVASMCSLLAIAV) traverse the membrane as a helical segment. The Cytoplasmic segment spans residues 139–155 (DRYITIFYALRYHHIMT). A helical transmembrane segment spans residues 156–179 (ARRSGVIIACIWTFCISCGIVFII). Topologically, residues 180–186 (YYESKYV) are extracellular. A helical membrane pass occupies residues 187–211 (IICLISMFFTMLFFMVSLYIHMFLL). Residues 212–239 (ARNHVKRIAASPRYNSVRQRTSMKGAIT) lie on the Cytoplasmic side of the membrane. The helical transmembrane segment at 240-265 (LTMLLGIFIVCWSPFFLHLILMISCP) threads the bilayer. Over 266-273 (QNVYCSCF) the chain is Extracellular. A helical membrane pass occupies residues 274-297 (MSYFNMYLILIMCNSVIDPLIYAL). The Cytoplasmic segment spans residues 298-325 (RSQEMRRTFKEIVCCHGFRRPCRLLGGY). Residues C311 and C312 are each lipidated (S-palmitoyl cysteine).

This sequence belongs to the G-protein coupled receptor 1 family. Skin, adrenal gland, skeletal muscle, bone marrow, spleen, thymus, gonads, uterus and brain.

Its subcellular location is the cell membrane. In terms of biological role, receptor for MSH (alpha, beta and gamma) and ACTH. The activity of this receptor is mediated by G proteins which activate adenylate cyclase. This receptor is a possible mediator of the immunomodulation properties of melanocortins. This is Melanocortin receptor 5 (Mc5r) from Mus musculus (Mouse).